The chain runs to 89 residues: Co-chaperonin GroES (89 aa).

The protein belongs to the GroES chaperonin family. Heptamer of 7 subunits arranged in a ring. Interacts with the chaperonin GroEL.

The protein resides in the cytoplasm. Functionally, together with the chaperonin GroEL, plays an essential role in assisting protein folding. The GroEL-GroES system forms a nano-cage that allows encapsulation of the non-native substrate proteins and provides a physical environment optimized to promote and accelerate protein folding. GroES binds to the apical surface of the GroEL ring, thereby capping the opening of the GroEL channel. The polypeptide is Co-chaperonin GroES (Parabacteroides distasonis (strain ATCC 8503 / DSM 20701 / CIP 104284 / JCM 5825 / NCTC 11152)).